The chain runs to 154 residues: Large ribosomal subunit protein uL13 (154 aa).

The protein belongs to the universal ribosomal protein uL13 family. In terms of assembly, part of the 50S ribosomal subunit.

Functionally, this protein is one of the early assembly proteins of the 50S ribosomal subunit, although it is not seen to bind rRNA by itself. It is important during the early stages of 50S assembly. This Rhizobium rhizogenes (strain K84 / ATCC BAA-868) (Agrobacterium radiobacter) protein is Large ribosomal subunit protein uL13.